The following is a 195-amino-acid chain: Probable GTP-binding protein EngB (195 aa).

Positions Gln-22–Arg-195 constitute an EngB-type G domain. Residues Gly-30–Ser-37, Gly-57–Thr-61, Asp-75–Gly-78, Thr-142–Asp-145, and Phe-174–Ala-176 each bind GTP. Residues Ser-37 and Thr-59 each contribute to the Mg(2+) site.

It belongs to the TRAFAC class TrmE-Era-EngA-EngB-Septin-like GTPase superfamily. EngB GTPase family. Mg(2+) serves as cofactor.

Necessary for normal cell division and for the maintenance of normal septation. The polypeptide is Probable GTP-binding protein EngB (Oceanobacillus iheyensis (strain DSM 14371 / CIP 107618 / JCM 11309 / KCTC 3954 / HTE831)).